Here is a 362-residue protein sequence, read N- to C-terminus: uncharacterized protein (362 aa).

A helical transmembrane segment spans residues 13-33; it reads VLILSVGLNMLFLLLFYSAIF. Positions 314–357 constitute a LysM domain; it reads EEYVVQDGDSLWLIAKRFGIPMDKIIQKNGLNHHRLFPGKVLKL.

It belongs to the chlamydial CPn_0593/CT_474/TC_0759 family.

The protein localises to the membrane. This is an uncharacterized protein from Chlamydia pneumoniae (Chlamydophila pneumoniae).